Here is a 432-residue protein sequence, read N- to C-terminus: Succinate--CoA ligase [GDP-forming] subunit beta, mitochondrial (432 aa).

A mitochondrion-targeting transit peptide spans 1–37 (MAAPVGAQARKLLRDLVLRPPLLAARSQVVQLTSRRW). Residues 46-274 (KKLMSDNGVK…NAEFRQKDIF (229 aa)) enclose the ATP-grasp domain. Position 57 (Gln-57) interacts with GTP. Lys-73 bears the N6-acetyllysine mark. At Lys-78 the chain carries N6-succinyllysine. 90 to 92 (GRG) lines the GTP pocket. Lys-111, Lys-132, and Lys-139 each carry N6-acetyllysine. Position 146 (Leu-146) interacts with GTP. Ser-161 bears the Phosphoserine mark. An N6-acetyllysine mark is found at Lys-200, Lys-218, and Lys-227. Mg(2+) is bound by residues Asn-243 and Asp-257. Lys-271 carries the N6-acetyllysine modification. Asn-308 lines the substrate pocket. Lys-338 carries the post-translational modification N6-succinyllysine. Lys-347 carries the N6-acetyllysine modification. 365 to 367 (GIV) contacts substrate. 2 positions are modified to N6-acetyllysine: Lys-386 and Lys-423.

It belongs to the succinate/malate CoA ligase beta subunit family. GTP-specific subunit beta subfamily. As to quaternary structure, heterodimer of an alpha and a beta subunit. The beta subunit determines specificity for GTP. It depends on Mg(2+) as a cofactor.

The protein resides in the mitochondrion. The enzyme catalyses GTP + succinate + CoA = succinyl-CoA + GDP + phosphate. It participates in carbohydrate metabolism; tricarboxylic acid cycle; succinate from succinyl-CoA (ligase route): step 1/1. Its function is as follows. GTP-specific succinyl-CoA synthetase functions in the citric acid cycle (TCA), coupling the hydrolysis of succinyl-CoA to the synthesis of GTP and thus represents the only step of substrate-level phosphorylation in the TCA. The beta subunit provides nucleotide specificity of the enzyme and binds the substrate succinate, while the binding sites for coenzyme A and phosphate are found in the alpha subunit. In Bos taurus (Bovine), this protein is Succinate--CoA ligase [GDP-forming] subunit beta, mitochondrial.